We begin with the raw amino-acid sequence, 1058 residues long: Carbamoyl phosphate synthase large chain (1058 aa).

A carboxyphosphate synthetic domain region spans residues 1–401; sequence MPKRKDIQKI…SLLKACRSLE (401 aa). Residues Arg-129, Arg-169, Gly-175, Gly-176, Arg-208, Ile-210, Glu-215, Gly-241, Ile-242, His-243, Gln-284, and Glu-298 each coordinate ATP. Residues 133–327 form the ATP-grasp 1 domain; it reads KQLMQELDQP…IAKLAAKIAV (195 aa). 3 residues coordinate Mg(2+): Gln-284, Glu-298, and Asn-300. Mn(2+) contacts are provided by Gln-284, Glu-298, and Asn-300. Positions 402 to 546 are oligomerization domain; sequence IGVCHNEMTS…YSTYELENES (145 aa). Residues 547 to 929 are carbamoyl phosphate synthetic domain; that stretch reads VQSNKESILV…ALYKAFEANN (383 aa). The ATP-grasp 2 domain occupies 671 to 861; that stretch reads EKALKELGIP…MAQIATKLIL (191 aa). 10 residues coordinate ATP: Arg-707, Ser-746, Ile-748, Glu-752, Gly-777, Val-778, His-779, Ser-780, Gln-820, and Glu-832. Mg(2+) contacts are provided by Gln-820, Glu-832, and Asn-834. 3 residues coordinate Mn(2+): Gln-820, Glu-832, and Asn-834. Positions 930–1058 constitute an MGS-like domain; that stretch reads SHLSEFGQIV…ESRCFNIEAI (129 aa). Positions 930–1058 are allosteric domain; it reads SHLSEFGQIV…ESRCFNIEAI (129 aa).

Belongs to the CarB family. In terms of assembly, composed of two chains; the small (or glutamine) chain promotes the hydrolysis of glutamine to ammonia, which is used by the large (or ammonia) chain to synthesize carbamoyl phosphate. Tetramer of heterodimers (alpha,beta)4. Mg(2+) is required as a cofactor. Requires Mn(2+) as cofactor.

It catalyses the reaction hydrogencarbonate + L-glutamine + 2 ATP + H2O = carbamoyl phosphate + L-glutamate + 2 ADP + phosphate + 2 H(+). The enzyme catalyses hydrogencarbonate + NH4(+) + 2 ATP = carbamoyl phosphate + 2 ADP + phosphate + 2 H(+). It participates in amino-acid biosynthesis; L-arginine biosynthesis; carbamoyl phosphate from bicarbonate: step 1/1. The protein operates within pyrimidine metabolism; UMP biosynthesis via de novo pathway; (S)-dihydroorotate from bicarbonate: step 1/3. Functionally, large subunit of the glutamine-dependent carbamoyl phosphate synthetase (CPSase). CPSase catalyzes the formation of carbamoyl phosphate from the ammonia moiety of glutamine, carbonate, and phosphate donated by ATP, constituting the first step of 2 biosynthetic pathways, one leading to arginine and/or urea and the other to pyrimidine nucleotides. The large subunit (synthetase) binds the substrates ammonia (free or transferred from glutamine from the small subunit), hydrogencarbonate and ATP and carries out an ATP-coupled ligase reaction, activating hydrogencarbonate by forming carboxy phosphate which reacts with ammonia to form carbamoyl phosphate. This Streptococcus pyogenes serotype M49 (strain NZ131) protein is Carbamoyl phosphate synthase large chain.